Reading from the N-terminus, the 228-residue chain is 2,3-bisphosphoglycerate-dependent phosphoglycerate mutase (228 aa).

Residues 8–15 (RHGQSQWN), 21–22 (TG), Arg-60, 87–90 (ERHY), Lys-98, 114–115 (RR), and 180–181 (GN) contribute to the substrate site. His-9 (tele-phosphohistidine intermediate) is an active-site residue. The Proton donor/acceptor role is filled by Glu-87.

The protein belongs to the phosphoglycerate mutase family. BPG-dependent PGAM subfamily. As to quaternary structure, homodimer.

It catalyses the reaction (2R)-2-phosphoglycerate = (2R)-3-phosphoglycerate. Its pathway is carbohydrate degradation; glycolysis; pyruvate from D-glyceraldehyde 3-phosphate: step 3/5. In terms of biological role, catalyzes the interconversion of 2-phosphoglycerate and 3-phosphoglycerate. This chain is 2,3-bisphosphoglycerate-dependent phosphoglycerate mutase, found in Novosphingobium aromaticivorans (strain ATCC 700278 / DSM 12444 / CCUG 56034 / CIP 105152 / NBRC 16084 / F199).